The chain runs to 130 residues: Small ribosomal subunit protein uS9 (130 aa).

The protein belongs to the universal ribosomal protein uS9 family.

The chain is Small ribosomal subunit protein uS9 from Azotobacter vinelandii (strain DJ / ATCC BAA-1303).